A 242-amino-acid chain; its full sequence is DNA repair protein RecO (242 aa).

Belongs to the RecO family. Monomer.

Its function is as follows. Involved in DNA repair and RecF pathway recombination. The polypeptide is DNA repair protein RecO (Salmonella gallinarum (strain 287/91 / NCTC 13346)).